Here is a 661-residue protein sequence, read N- to C-terminus: Zeaxanthin epoxidase, chloroplastic (661 aa).

The N-terminal 50 residues, 1-50, are a transit peptide targeting the chloroplast; sequence MASTLFYNSMNLSAAVFSRTHFPIPINKDFPLEFSPCIHTDYHLRSRTRS. Residues 82–110 and 360–373 contribute to the FAD site; these read RILV…VVFE and ILTW…LLGD. An FHA domain is found at 558–607; that stretch reads CIIGSAPHGDVSGISIAIPKPQVSEMHARISYKDGAFYLTDLRSEHGTWI.

Requires FAD as cofactor.

The protein localises to the plastid. It is found in the chloroplast. The catalysed reaction is all-trans-zeaxanthin + 4 reduced [2Fe-2S]-[ferredoxin] + 2 O2 + 4 H(+) = all-trans-violaxanthin + 4 oxidized [2Fe-2S]-[ferredoxin] + 2 H2O. It functions in the pathway plant hormone biosynthesis; abscisate biosynthesis. Converts zeaxanthin into antheraxanthin and subsequently violaxanthin. Involved in the epoxidation of zeaxanthin. This Prunus armeniaca (Apricot) protein is Zeaxanthin epoxidase, chloroplastic.